Here is a 1050-residue protein sequence, read N- to C-terminus: MPPPDSNPGSFRDHLKHDNKNNNSSTTSKGKQRYTPLHDSIPEEIASPRSASASSSFDLDPDLENQSRNDYKLRPLARSSSTNGGHNYSTAYIPVIRDEGDDVETYLDSITEAEQELLSLSKQYDFADDSDDFDSDDDAALRRKVQKQEQRRRRERLKAKVWTPVKYARIWRRTLVVVIVALALLVWGFLRFTAAQRQGPKVWPMLPSDSWFPSPKGGTLKHWEESYRKAQSLVRNMTLIEKVNITTGTGWQMGMCVGNTGPAELVKFPSLCLQDGPQGLRYADHVTAFPAGITTGSTWNRTLMRERGIAMGREARLKGVNVLLGPSIGPIGMMPAGGRNWEGFGSDPVLQGVAAAETIRGIQSNGVMATAKHFLMNEQEHFRQPFEWGISTALSSNVGDRALHEVFAWPFAESIRADVASVMCSYQMVNNSHACENSKLLNGILKDELGFQGFVQSDWLAQRSGINSALGGLDMSMPGDGLHWTDGKSLWGRELTRAVLNTSIPMERLNDMVTRIVAAWYQFEQDEWERPPPEGNGGPNFSSWTGGDVGWLHAGSNDGLYAVVNQYIDAQGTGPEAHSIIARKVAAEGTVLLKNVDHTLPLSRNASGPSGVMRVGIYGDDAGPAQGPNACPDRGCNQGTLATGWGSGTVDFPYLVSPLEALETAWKTEVEMTAFLRNAVMPADVADKDLCLVFANADSGEGFISAGGIHGDRNDLFLQKGGDTLIRTVASHCGEGQGKTVVVIHAVGPVVMESWIDLPGVHAVLLANLPGQESGNALMDVLFGDVDASGRLPYTIGKSLEEYGTEAQVLYEPNAPVPQVDLLDALFIDYRHFDQYNITPRFEFGFGLSYTTFKLKDLHVRSLQSKSRSPAARPAAAVSPPEYNTTLPDPALALFPPGFQPVYKYIYPYLPSLDGTAPANYSYYPKDYNQTQGPSPAGGGAGGNPALFQEMASVSVQVQNTGDRKGQEVVQVYVSFPSDEKVKIDFPERVLRNFTKVELEPGERREVQMTLSRKDLSYWSVREQNWVMPDGDFQIWVGRSSRDLPLQAKY.

The tract at residues 1–87 is disordered; sequence MPPPDSNPGS…RSSSTNGGHN (87 aa). The Cytoplasmic segment spans residues 1–174; the sequence is MPPPDSNPGS…VKYARIWRRT (174 aa). A compositionally biased stretch (basic and acidic residues) spans 11–20; that stretch reads FRDHLKHDNK. The segment covering 47–56 has biased composition (low complexity); that stretch reads SPRSASASSS. The span at 78 to 87 shows a compositional bias: polar residues; the sequence is RSSSTNGGHN. A helical; Signal-anchor for type II membrane protein transmembrane segment spans residues 175 to 195; it reads LVVVIVALALLVWGFLRFTAA. Over 196-1050 the chain is Extracellular; sequence QRQGPKVWPM…SRDLPLQAKY (855 aa). Asparagine 236, asparagine 244, asparagine 300, and asparagine 430 each carry an N-linked (GlcNAc...) asparagine glycan. Residue aspartate 458 is part of the active site. Residues asparagine 501, asparagine 540, asparagine 605, asparagine 884, asparagine 920, asparagine 929, and asparagine 993 are each glycosylated (N-linked (GlcNAc...) asparagine).

This sequence belongs to the glycosyl hydrolase 3 family.

It localises to the cell membrane. The catalysed reaction is Hydrolysis of terminal, non-reducing beta-D-glucosyl residues with release of beta-D-glucose.. Its pathway is glycan metabolism; cellulose degradation. In terms of biological role, beta-glucosidases are one of a number of cellulolytic enzymes involved in the degradation of cellulosic biomass. Catalyzes the last step releasing glucose from the inhibitory cellobiose. This Aspergillus clavatus (strain ATCC 1007 / CBS 513.65 / DSM 816 / NCTC 3887 / NRRL 1 / QM 1276 / 107) protein is Probable beta-glucosidase E (bglE).